The sequence spans 308 residues: Taste receptor type 2 member 46 (308 aa).

Residue M1 is a topological domain, extracellular. A helical transmembrane segment spans residues 2 to 22; it reads ITFLSITFSILVGVIFVIGNF. Over 23–46 the chain is Cytoplasmic; it reads ANGFIALVNSIEWVKRQKISFADQ. A helical transmembrane segment spans residues 47-67; that stretch reads ILTGLAVSRVGLLWVLLLHLY. Over 68–86 the chain is Extracellular; the sequence is ATEFNLAFYSVEVRITAYN. Residues 87 to 107 traverse the membrane as a helical segment; sequence VWIVTNHFSNWLSTSLSMFYL. Residues 108-126 are Cytoplasmic-facing; that stretch reads LKIATFSNLIFLHLKRKVK. The chain crosses the membrane as a helical span at residues 127 to 147; that stretch reads SVILVTLLGPLLFLVCHLFVM. Residues 148–178 are Extracellular-facing; the sequence is NMNHIVWRKEYEGNITWRIKLRSAMYLSNVT. 2 N-linked (GlcNAc...) asparagine glycosylation sites follow: N161 and N176. Residues 179–199 form a helical membrane-spanning segment; the sequence is VTMLANLIPLTLTLMSFLLLI. The Cytoplasmic portion of the chain corresponds to 200–229; that stretch reads CSLCKHLKKMQVHGKGSQDPSTKVHIKALQ. Residues 230 to 250 traverse the membrane as a helical segment; sequence TVTSFLLLCAIYFLSMILSVW. Topologically, residues 251 to 258 are extracellular; that stretch reads NFELEKKP. A helical membrane pass occupies residues 259–279; that stretch reads VFMFCQAVIFSYPSTHPLILI. Over 280–308 the chain is Cytoplasmic; that stretch reads WGNKKLKQIFLSVLWNVRYWVKGQKPSSP.

This sequence belongs to the G-protein coupled receptor T2R family.

The protein localises to the membrane. The protein resides in the cell projection. It is found in the cilium membrane. Functionally, receptor that may play a role in the perception of bitterness and is gustducin-linked. May play a role in sensing the chemical composition of the gastrointestinal content. The activity of this receptor may stimulate alpha gustducin, mediate PLC-beta-2 activation and lead to the gating of TRPM5. In airway epithelial cells, binding of bitter compounds increases the intracellular calcium ion concentration and stimulates ciliary beat frequency. The chain is Taste receptor type 2 member 46 (TAS2R46) from Macaca mulatta (Rhesus macaque).